The following is a 455-amino-acid chain: Kynureninase (455 aa).

Residues Leu94, Thr95, 122–125, Asp208, His211, and Tyr233 each bind pyridoxal 5'-phosphate; that span reads FPSD. N6-(pyridoxal phosphate)lysine is present on Lys234. Pyridoxal 5'-phosphate-binding residues include Trp275 and Asn303.

This sequence belongs to the kynureninase family. Homodimer. It depends on pyridoxal 5'-phosphate as a cofactor.

The protein localises to the cytoplasm. The catalysed reaction is L-kynurenine + H2O = anthranilate + L-alanine + H(+). It catalyses the reaction 3-hydroxy-L-kynurenine + H2O = 3-hydroxyanthranilate + L-alanine + H(+). The protein operates within amino-acid degradation; L-kynurenine degradation; L-alanine and anthranilate from L-kynurenine: step 1/1. It participates in cofactor biosynthesis; NAD(+) biosynthesis; quinolinate from L-kynurenine: step 2/3. In terms of biological role, catalyzes the cleavage of L-kynurenine (L-Kyn) and L-3-hydroxykynurenine (L-3OHKyn) into anthranilic acid (AA) and 3-hydroxyanthranilic acid (3-OHAA), respectively. The polypeptide is Kynureninase (Vanderwaltozyma polyspora (strain ATCC 22028 / DSM 70294 / BCRC 21397 / CBS 2163 / NBRC 10782 / NRRL Y-8283 / UCD 57-17) (Kluyveromyces polysporus)).